We begin with the raw amino-acid sequence, 123 residues long: uncharacterized protein (123 aa).

A signal peptide spans 1 to 24 (MLPLCLTFLSFFLSLGGSFKAVMT). 2 helical membrane passes run 39-59 (FWIFNWTVTLIPLNSLVALAI) and 101-121 (FGGILTIDLSFYWALGVALTG).

The protein localises to the membrane. This is an uncharacterized protein from Saccharomyces cerevisiae (strain ATCC 204508 / S288c) (Baker's yeast).